A 576-amino-acid chain; its full sequence is Alpha-bisabolol synthase (576 aa).

(2E,6E)-farnesyl diphosphate is bound by residues Arg-286, Asp-323, Asp-327, Arg-466, and Asn-469. Positions 323 and 327 each coordinate Mg(2+). The short motif at 323–327 (DDVYD) is the DDXXD motif element. Residues Asn-469, Thr-473, and Glu-477 each coordinate Mg(2+).

The protein belongs to the terpene synthase family. Tpsb subfamily. It depends on Mg(2+) as a cofactor. Mn(2+) serves as cofactor.

Functionally, produces a mixture of beta-bisabolene and alpha-bisabolol, along with traces of alpha-bisabolene and farnesene isomers from (2E,6E)-farnesyl diphosphate in fragrance biosynthesis. This is Alpha-bisabolol synthase from Santalum spicatum (Australian sandalwood).